Consider the following 92-residue polypeptide: Secreted RxLR effector protein 21 (92 aa).

Positions 1 to 21 (MNLSTLLLTLACISQLHGGSA) are cleaved as a signal peptide. The short motif at 30 to 33 (RQLR) is the RxLR element.

It belongs to the RxLR effector family.

It localises to the secreted. The protein resides in the host nucleus. The protein localises to the host cytoplasm. In terms of biological role, secreted effector that completely suppresses the host cell death induced by cell death-inducing proteins. The polypeptide is Secreted RxLR effector protein 21 (Plasmopara viticola (Downy mildew of grapevine)).